We begin with the raw amino-acid sequence, 442 residues long: 5-methylthioadenosine/S-adenosylhomocysteine deaminase (442 aa).

Zn(2+) is bound by residues H70 and H72. Substrate-binding residues include E99 and H191. Residue H218 participates in Zn(2+) binding. The substrate site is built by E221 and D306. Residue D306 coordinates Zn(2+).

It belongs to the metallo-dependent hydrolases superfamily. MTA/SAH deaminase family. It depends on Zn(2+) as a cofactor.

It carries out the reaction S-adenosyl-L-homocysteine + H2O + H(+) = S-inosyl-L-homocysteine + NH4(+). The catalysed reaction is S-methyl-5'-thioadenosine + H2O + H(+) = S-methyl-5'-thioinosine + NH4(+). Functionally, catalyzes the deamination of 5-methylthioadenosine and S-adenosyl-L-homocysteine into 5-methylthioinosine and S-inosyl-L-homocysteine, respectively. Is also able to deaminate adenosine. The chain is 5-methylthioadenosine/S-adenosylhomocysteine deaminase from Nitratidesulfovibrio vulgaris (strain ATCC 29579 / DSM 644 / CCUG 34227 / NCIMB 8303 / VKM B-1760 / Hildenborough) (Desulfovibrio vulgaris).